Here is a 242-residue protein sequence, read N- to C-terminus: uncharacterized protein (242 aa).

S-adenosyl-L-methionine-binding residues include glycine 198, isoleucine 218, and leucine 227.

The protein belongs to the class IV-like SAM-binding methyltransferase superfamily. RNA methyltransferase TrmH family.

This is an uncharacterized protein from Mycoplasma genitalium (strain ATCC 33530 / DSM 19775 / NCTC 10195 / G37) (Mycoplasmoides genitalium).